The primary structure comprises 276 residues: Large ribosomal subunit protein uL2 (276 aa).

The interval Pro-218–Lys-276 is disordered. Residues Lys-258–Lys-276 are compositionally biased toward basic residues.

It belongs to the universal ribosomal protein uL2 family. As to quaternary structure, part of the 50S ribosomal subunit. Forms a bridge to the 30S subunit in the 70S ribosome.

Its function is as follows. One of the primary rRNA binding proteins. Required for association of the 30S and 50S subunits to form the 70S ribosome, for tRNA binding and peptide bond formation. It has been suggested to have peptidyltransferase activity; this is somewhat controversial. Makes several contacts with the 16S rRNA in the 70S ribosome. This Finegoldia magna (strain ATCC 29328 / DSM 20472 / WAL 2508) (Peptostreptococcus magnus) protein is Large ribosomal subunit protein uL2.